The primary structure comprises 229 residues: Sugar fermentation stimulation protein homolog (229 aa).

Belongs to the SfsA family.

This chain is Sugar fermentation stimulation protein homolog, found in Carboxydothermus hydrogenoformans (strain ATCC BAA-161 / DSM 6008 / Z-2901).